The chain runs to 319 residues: Acetaldehyde dehydrogenase 1 (319 aa).

C129 serves as the catalytic Acyl-thioester intermediate. NAD(+) contacts are provided by residues 160–168 (SAGPGTRAN) and N287.

This sequence belongs to the acetaldehyde dehydrogenase family.

The enzyme catalyses acetaldehyde + NAD(+) + CoA = acetyl-CoA + NADH + H(+). This Burkholderia lata (strain ATCC 17760 / DSM 23089 / LMG 22485 / NCIMB 9086 / R18194 / 383) protein is Acetaldehyde dehydrogenase 1.